The primary structure comprises 175 residues: MGAAPSRIVDNLLDDTNFDRAEIERLKKRFMKLDKDSSGSIDKTEFMSIPGVSANPLAKRIIEVFDEDNSGDVDFQEFITSLSIFSGRGETDAKLRFAFRIYDIDKDGYISNGELFIVLKIMVGTNLEDEQLQQIVDRTIMENDVDGDGKLSFEEFKKAAETTEVIQSLTLQHNI.

EF-hand domains lie at 21–56 (AEIE…SANP), 58–88 (AKRI…FSGR), 90–125 (ETDA…MVGT), and 131–166 (QLQQ…TEVI). Residues D34, D36, S38, S40, E45, D66, D68, S70, D72, E77, D103, D105, D107, Y109, E114, D144, D146, D148, K150, and E155 each coordinate Ca(2+).

The protein belongs to the calcineurin regulatory subunit family. Composed of a catalytic subunit (A) and a regulatory subunit (B).

In terms of biological role, regulatory subunit of calcineurin, a calcium-dependent, calmodulin stimulated protein phosphatase. Confers calcium sensitivity. The protein is Calcineurin subunit B (CNB1) of Kluyveromyces lactis (strain ATCC 8585 / CBS 2359 / DSM 70799 / NBRC 1267 / NRRL Y-1140 / WM37) (Yeast).